Consider the following 183-residue polypeptide: A-type ATP synthase subunit E (183 aa).

The protein belongs to the V-ATPase E subunit family. As to quaternary structure, has multiple subunits with at least A(3), B(3), C, D, E, F, H, I and proteolipid K(x).

It localises to the cell membrane. Its function is as follows. Component of the A-type ATP synthase that produces ATP from ADP in the presence of a proton gradient across the membrane. The protein is A-type ATP synthase subunit E of Methanosarcina barkeri (strain Fusaro / DSM 804).